The primary structure comprises 193 residues: uncharacterized protein (193 aa).

This is an uncharacterized protein from Saccharomyces cerevisiae (strain ATCC 204508 / S288c) (Baker's yeast).